The following is an 843-amino-acid chain: Toll-like receptor 4 (843 aa).

The first 23 residues, M1–P23, serve as a signal peptide directing secretion. In terms of domain architecture, LRRNT spans E24–T54. The Extracellular segment spans residues E24–K633. A disulfide bridge links C29 with C40. An N-linked (GlcNAc...) asparagine glycan is attached at N35. LRR repeat units follow at residues S55–N76, E79–G100, H103–G124, S127–H148, T151–S172, N176–V197, N205–E225, and K227–I247. N189 and N205 each carry an N-linked (GlcNAc...) asparagine glycan. Residues N282 and N295 are each glycosylated (N-linked (GlcNAc...) asparagine). 9 LRR repeats span residues S353–P374, S375–K398, R401–E423, Q424–L445, N449–N459, S473–M496, N498–L519, R522–P543, and S546–P569. C391 and C392 are joined by a disulfide. 2 N-linked (GlcNAc...) asparagine glycosylation sites follow: N498 and N527. N576 is a glycosylation site (N-linked (GlcNAc...) asparagine). The LRRCT domain maps to N580–I631. 2 disulfide bridges follow: C584-C610 and C586-C629. N-linked (GlcNAc...) asparagine glycosylation is present at N626. Residues T634–Y654 form a helical membrane-spanning segment. Over K655 to T843 the chain is Cytoplasmic. Residues S674–L817 form the TIR domain. Positions S824–T843 are disordered. Residues A832 to T843 show a composition bias toward basic and acidic residues.

This sequence belongs to the Toll-like receptor family. Belongs to the lipopolysaccharide (LPS) receptor, a multi-protein complex containing at least CD14, LY96 and TLR4. Binding to bacterial LPS leads to homodimerization. Interacts with LY96 via the extracellular domain. Interacts with MYD88 and TIRAP via their respective TIR domains. Interacts with NOX4. Interacts with CNPY3 and HSP90B1; this interaction is required for proper folding in the endoplasmic reticulum. Interacts with MAP3K21; this interaction leads to negative regulation of TLR4 signaling. Interacts with CD36, following CD36 stimulation by oxLDL or amyloid-beta 42, and forms a heterodimer with TLR6. The trimeric complex is internalized and triggers inflammatory response. LYN kinase activity facilitates TLR4-TLR6 heterodimerization and signal initiation. Interacts with TICAM1 in response to LPS in a WDFY1-dependent manner. Interacts with WDFY1 in response to LPS. Interacts with SMPDL3B. Interacts with CEACAM1; upon lipopolysaccharide stimulation, forms a complex including TLR4 and the phosphorylated form of SYK and CEACAM1, which in turn, recruits PTPN6 that dephosphorylates SYK, reducing the production of reactive oxygen species (ROS) and lysosome disruption, which in turn, reduces the activity of the inflammasome. Interacts with RFTN1; the interaction occurs in response to lipopolysaccharide stimulation. Interacts with SCIMP; the interaction occurs in response to lipopolysaccharide stimulation and is enhanced by phosphorylation of SCIMP by LYN. This interaction facilitates the phosphorylation of TLR4 by LYN which elicits a selective cytokine response in macrophages. Interacts with TRAF3IP3. Interacts with TREM1; this interaction enhances TLR4-mediated inflammatory response. Interacts with ZG16B/PAUF. Interacts with CD82; this interaction inhibits TLR4-mediated signaling pathway. Phosphorylated on tyrosine residues by LYN after binding lipopolysaccharide. In terms of processing, ubiquitinated by RNF128 via 'Lys-28'-linked polyubiquitin chains, leading to proteasomal degradation.

It is found in the cell membrane. It localises to the early endosome. Its subcellular location is the cell projection. The protein resides in the ruffle. Transmembrane receptor that functions as a pattern recognition receptor recognizing pathogen- and damage-associated molecular patterns (PAMPs and DAMPs) to induce innate immune responses via downstream signaling pathways. At the plasma membrane, cooperates with LY96 to mediate the innate immune response to bacterial lipopolysaccharide (LPS). Also involved in LPS-independent inflammatory responses triggered by free fatty acids, such as palmitate, and Ni(2+). Mechanistically, acts via MYD88, TIRAP and TRAF6, leading to NF-kappa-B activation, cytokine secretion and the inflammatory response. Alternatively, CD14-mediated TLR4 internalization via endocytosis is associated with the initiation of a MYD88-independent signaling via the TICAM1-TBK1-IRF3 axis leading to type I interferon production. In addition to the secretion of proinflammatory cytokines, initiates the activation of NLRP3 inflammasome and formation of a positive feedback loop between autophagy and NF-kappa-B signaling cascade. In complex with TLR6, promotes inflammation in monocytes/macrophages by associating with TLR6 and the receptor CD86. Upon ligand binding, such as oxLDL or amyloid-beta 42, the TLR4:TLR6 complex is internalized and triggers inflammatory response, leading to NF-kappa-B-dependent production of CXCL1, CXCL2 and CCL9 cytokines, via MYD88 signaling pathway, and CCL5 cytokine, via TICAM1 signaling pathway. In myeloid dendritic cells, vesicular stomatitis virus glycoprotein G but not LPS promotes the activation of IRF7, leading to type I IFN production in a CD14-dependent manner. This is Toll-like receptor 4 (TLR4) from Equus caballus (Horse).